We begin with the raw amino-acid sequence, 227 residues long: NDR1/HIN1-like protein 10 (227 aa).

A helical transmembrane segment spans residues 42-62; the sequence is VKVIISLIVILGVAALIFWLI. Residues asparagine 138 and asparagine 210 are each glycosylated (N-linked (GlcNAc...) asparagine).

As to expression, expressed in senescing leaves.

The protein resides in the cell membrane. Functionally, may play a role in plant immunity. This chain is NDR1/HIN1-like protein 10, found in Arabidopsis thaliana (Mouse-ear cress).